A 427-amino-acid chain; its full sequence is Trigger factor (427 aa).

The PPIase FKBP-type domain maps to 163 to 248 (GDVVNLDFDG…INEVKSKEVP (86 aa)).

The protein belongs to the FKBP-type PPIase family. Tig subfamily.

It is found in the cytoplasm. It catalyses the reaction [protein]-peptidylproline (omega=180) = [protein]-peptidylproline (omega=0). Its function is as follows. Involved in protein export. Acts as a chaperone by maintaining the newly synthesized protein in an open conformation. Functions as a peptidyl-prolyl cis-trans isomerase. The protein is Trigger factor of Macrococcus caseolyticus (strain JCSC5402) (Macrococcoides caseolyticum).